A 440-amino-acid chain; its full sequence is D-serine dehydratase (440 aa).

Lysine 116 is subject to N6-(pyridoxal phosphate)lysine.

The protein belongs to the serine/threonine dehydratase family. DsdA subfamily. In terms of assembly, monomer. Pyridoxal 5'-phosphate serves as cofactor.

It carries out the reaction D-serine = pyruvate + NH4(+). The sequence is that of D-serine dehydratase from Salmonella schwarzengrund (strain CVM19633).